We begin with the raw amino-acid sequence, 364 residues long: Nucleosome assembly protein 1;2 (364 aa).

Residues Val-32 to Glu-86 are a coiled coil. The Nuclear export signal motif lies at Leu-53–Gln-68. The Nuclear localization signal motif lies at Lys-227–Lys-232. Disordered regions lie at residues Phe-250 to Thr-269 and Gly-301 to Gln-364. Composition is skewed to acidic residues over residues Pro-259–Thr-269 and Ala-304–Asp-340. A Cysteine methyl ester modification is found at Cys-361. Cys-361 carries the S-farnesyl cysteine lipid modification. Positions Lys-362–Gln-364 are cleaved as a propeptide — removed in mature form.

Belongs to the nucleosome assembly protein (NAP) family.

The protein localises to the nucleus. It is found in the cytoplasm. Functionally, may modulate chromatin structure by regulation of nucleosome assembly/disassembly. The protein is Nucleosome assembly protein 1;2 (NAP1;2) of Oryza sativa subsp. japonica (Rice).